The chain runs to 616 residues: Proline--tRNA ligase (616 aa).

The protein belongs to the class-II aminoacyl-tRNA synthetase family. ProS type 1 subfamily. In terms of assembly, homodimer.

The protein resides in the cytoplasm. The catalysed reaction is tRNA(Pro) + L-proline + ATP = L-prolyl-tRNA(Pro) + AMP + diphosphate. Catalyzes the attachment of proline to tRNA(Pro) in a two-step reaction: proline is first activated by ATP to form Pro-AMP and then transferred to the acceptor end of tRNA(Pro). As ProRS can inadvertently accommodate and process non-cognate amino acids such as alanine and cysteine, to avoid such errors it has two additional distinct editing activities against alanine. One activity is designated as 'pretransfer' editing and involves the tRNA(Pro)-independent hydrolysis of activated Ala-AMP. The other activity is designated 'posttransfer' editing and involves deacylation of mischarged Ala-tRNA(Pro). The misacylated Cys-tRNA(Pro) is not edited by ProRS. The sequence is that of Proline--tRNA ligase from Lactococcus lactis subsp. lactis (strain IL1403) (Streptococcus lactis).